A 117-amino-acid polypeptide reads, in one-letter code: Large ribosomal subunit protein bL20 (117 aa).

Belongs to the bacterial ribosomal protein bL20 family.

Functionally, binds directly to 23S ribosomal RNA and is necessary for the in vitro assembly process of the 50S ribosomal subunit. It is not involved in the protein synthesizing functions of that subunit. The chain is Large ribosomal subunit protein bL20 from Lawsonia intracellularis (strain PHE/MN1-00).